A 271-amino-acid chain; its full sequence is Thiazole synthase (271 aa).

The active-site Schiff-base intermediate with DXP is lysine 95. 1-deoxy-D-xylulose 5-phosphate contacts are provided by residues glycine 156, 182–183 (AG), and 204–205 (NT).

This sequence belongs to the ThiG family. Homotetramer. Forms heterodimers with either ThiH or ThiS.

It is found in the cytoplasm. The catalysed reaction is [ThiS sulfur-carrier protein]-C-terminal-Gly-aminoethanethioate + 2-iminoacetate + 1-deoxy-D-xylulose 5-phosphate = [ThiS sulfur-carrier protein]-C-terminal Gly-Gly + 2-[(2R,5Z)-2-carboxy-4-methylthiazol-5(2H)-ylidene]ethyl phosphate + 2 H2O + H(+). It functions in the pathway cofactor biosynthesis; thiamine diphosphate biosynthesis. Functionally, catalyzes the rearrangement of 1-deoxy-D-xylulose 5-phosphate (DXP) to produce the thiazole phosphate moiety of thiamine. Sulfur is provided by the thiocarboxylate moiety of the carrier protein ThiS. In vitro, sulfur can be provided by H(2)S. The protein is Thiazole synthase of Yersinia pseudotuberculosis serotype O:3 (strain YPIII).